Reading from the N-terminus, the 389-residue chain is Pre-mRNA-splicing factor PRP46 (389 aa).

WD repeat units lie at residues 83-123 (AHQG…LKAV), 126-165 (GHVLGIRSLCISKRHPYLFSGGEDKSLRCWDLERSNSDAG), 173-212 (GHLGGVYSIGLHPELDVLFSGGKDCVVRVWDIRSRVEAMT), 215-254 (GHTNDITSIETDYNDPQVITSSMDGTIRLWDLRKSKTELL), 257-298 (NHSK…NEFG), 308-347 (DNSRIINTLAINPVTNTLFSGYDDGKLEFYNYTTGNLQQS), and 356-389 (PEQSAIYASTFDMSGLRLLTCHGDKSIRIWGTSY).

This sequence belongs to the WD repeat PRL1/PRL2 family. As to quaternary structure, associated with the spliceosome.

Its subcellular location is the cytoplasm. The protein resides in the nucleus. Involved in pre-mRNA splicing and required for cell cycle progression at G2/M. The polypeptide is Pre-mRNA-splicing factor PRP46 (PRP46) (Candida albicans (strain SC5314 / ATCC MYA-2876) (Yeast)).